Here is a 236-residue protein sequence, read N- to C-terminus: 2,3,4,5-tetrahydropyridine-2,6-dicarboxylate N-acetyltransferase (236 aa).

The protein belongs to the transferase hexapeptide repeat family. DapH subfamily.

It carries out the reaction (S)-2,3,4,5-tetrahydrodipicolinate + acetyl-CoA + H2O = L-2-acetamido-6-oxoheptanedioate + CoA. Its pathway is amino-acid biosynthesis; L-lysine biosynthesis via DAP pathway; LL-2,6-diaminopimelate from (S)-tetrahydrodipicolinate (acetylase route): step 1/3. Functionally, catalyzes the transfer of an acetyl group from acetyl-CoA to tetrahydrodipicolinate. This chain is 2,3,4,5-tetrahydropyridine-2,6-dicarboxylate N-acetyltransferase, found in Bacillus pumilus (strain SAFR-032).